Reading from the N-terminus, the 188-residue chain is MGLRLRLVLLKGRNQRLEINRVVALLVDGGHFPLESRICEAIVDQEICWRDDERLPGIPVMWQGCLQKDVQHAIRSAAIQIQIVCPCPAPSPIFELKQLIIQKRTNLLSHPQGTFVRTVRQRMPVIGVVIVLPGLGPQYSRSRLNYCFSRQQPRARMALEEIDFLVFHYRLLARVVPCYSDAPPRFMC.

This is an uncharacterized protein from Saccharomyces cerevisiae (strain ATCC 204508 / S288c) (Baker's yeast).